The sequence spans 252 residues: Hsp70-Hsp90 organising protein (252 aa).

3 TPR repeats span residues 7-40 (AQRLKELGNKCFQEGKYEEAVKYFSDAITNDPLD), 41-74 (HVLYSNLSGAFASLGRFYEALESANKCISIKKDW), and 75-108 (PKGYIRKGCAEHGLRQLSNAEKTYLEGLKIDPNN). Residues 197 to 239 (EGNDAEERQRQQREEEERRKKKEEEERKKKEEEEMKKQNRTPE) adopt a coiled-coil conformation. Residues 199–252 (NDAEERQRQQREEEERRKKKEEEERKKKEEEEMKKQNRTPEQIQGDEHKLKVMN) are disordered. Basic and acidic residues-rich tracts occupy residues 201-233 (AEERQRQQREEEERRKKKEEEERKKKEEEEMKK) and 243-252 (GDEHKLKVMN).

In terms of assembly, monomer. Homodimer. Forms a complex composed of HOP and chaperones HSP70 and HSP90; the interaction is stronger in the absence of ATP. Interacts (via TPR 1, 2, 3, 7, 8 and 9 repeats) with HSP70 (via C-terminus); the interaction is direct and is stronger in the absence of ATP. Interacts (via TPR 4, 5 and 6 repeats) with HSP90 (via C-terminus); the interaction is direct.

Its subcellular location is the cytoplasm. In terms of biological role, acts as a co-chaperone and mediates the association of the chaperones HSP70 and HSP90 probably facilitating substrate transfer from HSP70 to HSP90. Stimulates HSP70 ATPase activity and, in contrast, inhibits HSP90 ATPase activity. This chain is Hsp70-Hsp90 organising protein, found in Plasmodium falciparum.